The primary structure comprises 380 residues: Cytochrome b (380 aa).

The next 4 helical transmembrane spans lie at 34-54 (FGSL…LLAT), 78-99 (WLIR…YLHI), 114-134 (WNTG…GYVL), and 179-199 (FFAL…IHLT). His84 and His98 together coordinate heme b. Residues His183 and His197 each contribute to the heme b site. His202 provides a ligand contact to a ubiquinone. Transmembrane regions (helical) follow at residues 227–247 (LKDI…ALFS), 289–309 (LGGV…PLLH), 321–341 (LSQL…WVGS), and 348–368 (FIII…LLFP).

Belongs to the cytochrome b family. As to quaternary structure, the cytochrome bc1 complex contains 11 subunits: 3 respiratory subunits (MT-CYB, CYC1 and UQCRFS1), 2 core proteins (UQCRC1 and UQCRC2) and 6 low-molecular weight proteins (UQCRH/QCR6, UQCRB/QCR7, UQCRQ/QCR8, UQCR10/QCR9, UQCR11/QCR10 and a cleavage product of UQCRFS1). This cytochrome bc1 complex then forms a dimer. Requires heme b as cofactor.

It is found in the mitochondrion inner membrane. Its function is as follows. Component of the ubiquinol-cytochrome c reductase complex (complex III or cytochrome b-c1 complex) that is part of the mitochondrial respiratory chain. The b-c1 complex mediates electron transfer from ubiquinol to cytochrome c. Contributes to the generation of a proton gradient across the mitochondrial membrane that is then used for ATP synthesis. The sequence is that of Cytochrome b (MT-CYB) from Cepphus grylle (Black guillemot).